Here is a 194-residue protein sequence, read N- to C-terminus: Sigma factor AlgU negative regulatory protein (194 aa).

A helical transmembrane segment spans residues 89 to 105 (LAVAASVTLAVLAGVRL).

It belongs to the RseA family.

It localises to the cell membrane. Negative regulator of the sigma factor AlgU. Plays a role in the differentiation of P.aeruginosa into the alginate-producing form. Inactivation of mucA causes a switch from the non-mucoid to mucoid state resulting in constitutive expression of alginate biosynthetic genes. The protein is Sigma factor AlgU negative regulatory protein (mucA) of Pseudomonas aeruginosa (strain ATCC 15692 / DSM 22644 / CIP 104116 / JCM 14847 / LMG 12228 / 1C / PRS 101 / PAO1).